A 1364-amino-acid polypeptide reads, in one-letter code: Serine protease EatA (1364 aa).

Residues 1–56 (MNKVFSLKYSFLAKGFIAVSELARRVSVKGKLKSASSIIISPITIAIVSYAPPSLA) form the signal peptide. Residues 57–307 (ATVNADISYQ…VVTTQDFLHQ (251 aa)) form the Peptidase S6 domain. Active-site charge relay system residues include H134, D162, and S267. Positions 1098–1364 (DSQGDAGGWA…SINANFRYYF (267 aa)) constitute an Autotransporter domain.

In terms of processing, cleaved to release the mature protein from the outer membrane.

Its subcellular location is the periplasm. It is found in the secreted. The protein resides in the cell surface. It localises to the cell outer membrane. Inhibited by phenylmethylsulfonyl fluoride. Autotransporter serine protease probably involved in virulence. The protein is Serine protease EatA (eatA) of Escherichia coli O78:H11 (strain H10407 / ETEC).